Reading from the N-terminus, the 162-residue chain is Phosphopantetheine adenylyltransferase (162 aa).

Residue T9 participates in substrate binding. Residues 9 to 10 and H17 each bind ATP; that span reads TF. Substrate contacts are provided by K41, L77, and R91. ATP is bound by residues 92–94, E102, and 127–133; these read GLR and RQAIASK.

Belongs to the bacterial CoaD family. In terms of assembly, homohexamer. The cofactor is Mg(2+).

Its subcellular location is the cytoplasm. The enzyme catalyses (R)-4'-phosphopantetheine + ATP + H(+) = 3'-dephospho-CoA + diphosphate. The protein operates within cofactor biosynthesis; coenzyme A biosynthesis; CoA from (R)-pantothenate: step 4/5. Reversibly transfers an adenylyl group from ATP to 4'-phosphopantetheine, yielding dephospho-CoA (dPCoA) and pyrophosphate. In Cereibacter sphaeroides (strain ATCC 17029 / ATH 2.4.9) (Rhodobacter sphaeroides), this protein is Phosphopantetheine adenylyltransferase.